A 114-amino-acid polypeptide reads, in one-letter code: Putative protein TfaS (114 aa).

Belongs to the tfa family.

The sequence is that of Putative protein TfaS (tfaS) from Escherichia coli (strain K12).